Consider the following 205-residue polypeptide: Ribosome maturation factor RimP (205 aa).

The segment covering 1–13 (MSNAEATTSSDRT) has biased composition (polar residues). The tract at residues 1-27 (MSNAEATTSSDRTGTGKAEAESVHNPE) is disordered. Over residues 18–27 (AEAESVHNPE) the composition is skewed to basic and acidic residues.

This sequence belongs to the RimP family.

It localises to the cytoplasm. Functionally, required for maturation of 30S ribosomal subunits. This Arthrobacter sp. (strain FB24) protein is Ribosome maturation factor RimP.